The sequence spans 482 residues: ATP-dependent rRNA helicase rrp3 (482 aa).

The tract at residues 1-55 (MSSVKRRKTEKNTSSGLKSKQAKEPKEASPLSSPEPTEENQNNEIEEGTEEEEVT) is disordered. Over residues 44-53 (EIEEGTEEEE) the composition is skewed to acidic residues. Residues 56 to 84 (KSFKDLGIVDSLCEACDTLGYKAPTPIQR) carry the Q motif motif. The Helicase ATP-binding domain occupies 87 to 258 (IPLALQGRDL…RASLKDPLRV (172 aa)). Residue 100–107 (AETGSGKT) coordinates ATP. The DEAD box motif lies at 206 to 209 (DEAD). The 149-residue stretch at 282–430 (HKDTYLIYLL…EYQTVKDEVM (149 aa)) folds into the Helicase C-terminal domain. 2 stretches are compositionally biased toward basic and acidic residues: residues 444–456 (RNEM…DRGK) and 472–482 (RGRDEMDREEG). The segment at 444–482 (RNEMKNLHEDRGKKGAVLKGRRPANGAKRGRDEMDREEG) is disordered.

The protein belongs to the DEAD box helicase family. DDX47/RRP3 subfamily. In terms of assembly, interacts with the SSU processome.

The protein resides in the nucleus. It catalyses the reaction ATP + H2O = ADP + phosphate + H(+). Functionally, ATP-dependent rRNA helicase required for pre-ribosomal RNA processing. Involved in the maturation of the 35S-pre-rRNA and to its cleavage to mature 18S rRNA. The polypeptide is ATP-dependent rRNA helicase rrp3 (Sclerotinia sclerotiorum (strain ATCC 18683 / 1980 / Ss-1) (White mold)).